We begin with the raw amino-acid sequence, 394 residues long: Aspergillopepsin-1 (394 aa).

The signal sequence occupies residues 1 to 20; it reads MVVFSKVTAAVFGLATIASA. Residues 21–69 constitute a propeptide, activation peptide; the sequence is APAPPTRKGFTVQQQARPAQKKQVNLPAMYAHALTKFGGSVPESVKVAA. A Peptidase A1 domain is found at 85–391; sequence YLTPVNVGGT…DSEGPRLGFA (307 aa). Residues Asp-101 and Asp-283 contribute to the active site. The cysteines at positions 319 and 354 are disulfide-linked.

It belongs to the peptidase A1 family. As to quaternary structure, monomer.

It is found in the secreted. It catalyses the reaction Hydrolysis of proteins with broad specificity. Generally favors hydrophobic residues in P1 and P1', but also accepts Lys in P1, which leads to activation of trypsinogen. Does not clot milk.. In terms of biological role, secreted aspartic endopeptidase that allows assimilation of proteinaceous substrates. The scissile peptide bond is attacked by a nucleophilic water molecule activated by two aspartic residues in the active site. Shows a broad primary substrate specificity. Favors hydrophobic residues at the P1 and P1' positions, but also accepts a lysine residue in the P1 position, leading to the activation of trypsinogen and chymotrypsinogen A. This Aspergillus clavatus (strain ATCC 1007 / CBS 513.65 / DSM 816 / NCTC 3887 / NRRL 1 / QM 1276 / 107) protein is Aspergillopepsin-1 (pepA).